The sequence spans 328 residues: Phosphate acyltransferase (328 aa).

Belongs to the PlsX family. As to quaternary structure, homodimer. Probably interacts with PlsY.

The protein resides in the cytoplasm. It catalyses the reaction a fatty acyl-[ACP] + phosphate = an acyl phosphate + holo-[ACP]. Its pathway is lipid metabolism; phospholipid metabolism. Catalyzes the reversible formation of acyl-phosphate (acyl-PO(4)) from acyl-[acyl-carrier-protein] (acyl-ACP). This enzyme utilizes acyl-ACP as fatty acyl donor, but not acyl-CoA. This is Phosphate acyltransferase from Campylobacter jejuni subsp. jejuni serotype O:23/36 (strain 81-176).